Consider the following 90-residue polypeptide: Small ribosomal subunit protein uS15 (90 aa).

The protein belongs to the universal ribosomal protein uS15 family. As to quaternary structure, part of the 30S ribosomal subunit. Forms a bridge to the 50S subunit in the 70S ribosome, contacting the 23S rRNA.

In terms of biological role, one of the primary rRNA binding proteins, it binds directly to 16S rRNA where it helps nucleate assembly of the platform of the 30S subunit by binding and bridging several RNA helices of the 16S rRNA. Its function is as follows. Forms an intersubunit bridge (bridge B4) with the 23S rRNA of the 50S subunit in the ribosome. The polypeptide is Small ribosomal subunit protein uS15 (Wolbachia pipientis wMel).